Reading from the N-terminus, the 231-residue chain is MAKVSKRLKALRSSVEANKLYAIDEAIALVKKAATAKFDESVDVSFNLGVDPRKSDQVIRGSVVLPKGTGKTTRVAVFTQGANAEAAKEAGADIVGFEDLAAEIKAGNLNFDVVIASPDAMRIVGQLGTILGPRGLMPNPKVGTVTPNVAEAVKNAKAGQVQYRTDKAGIVHATIGRASFAEADLKENFDALLDAIVKAKPAAAKGQYLKKVAVSSTMGLGIRVDTSSVNN.

This sequence belongs to the universal ribosomal protein uL1 family. In terms of assembly, part of the 50S ribosomal subunit.

Binds directly to 23S rRNA. The L1 stalk is quite mobile in the ribosome, and is involved in E site tRNA release. In terms of biological role, protein L1 is also a translational repressor protein, it controls the translation of the L11 operon by binding to its mRNA. This chain is Large ribosomal subunit protein uL1, found in Neisseria meningitidis serogroup C (strain 053442).